The chain runs to 160 residues: Ribonuclease HI (160 aa).

Positions 4–147 constitute an RNase H type-1 domain; sequence TPNSVTLYTD…CDRLAVAAYQ (144 aa). Residues D13, E52, D74, and D139 each coordinate Mg(2+).

Belongs to the RNase H family. In terms of assembly, monomer. It depends on Mg(2+) as a cofactor.

It localises to the cytoplasm. The catalysed reaction is Endonucleolytic cleavage to 5'-phosphomonoester.. Endonuclease that specifically degrades the RNA of RNA-DNA hybrids. The sequence is that of Ribonuclease HI (rnhA) from Synechocystis sp. (strain ATCC 27184 / PCC 6803 / Kazusa).